The sequence spans 196 residues: UMP-CMP kinase (196 aa).

13–18 (GAGKGT) contacts ATP. Residues 33 to 63 (SAGDLLREERSRTDSEFGQLIDSYIKEGKIV) form an NMP region. A ribonucleoside 5'-phosphate contacts are provided by residues R39, 61–63 (KIV), and 93–96 (GFPR). N100 serves as a coordination point for CMP. Residues 133–143 (ERGKSSGRTDD) are LID. R134 lines the ATP pocket. 2 residues coordinate a ribonucleoside 5'-phosphate: R140 and R151. An ATP-binding site is contributed by R179.

It belongs to the adenylate kinase family. UMP-CMP kinase subfamily. Monomer. It depends on Mg(2+) as a cofactor.

The protein resides in the nucleus. Its subcellular location is the cytoplasm. The enzyme catalyses CMP + ATP = CDP + ADP. It catalyses the reaction dCMP + ATP = dCDP + ADP. It carries out the reaction UMP + ATP = UDP + ADP. The catalysed reaction is a 2'-deoxyribonucleoside 5'-diphosphate + ATP = a 2'-deoxyribonucleoside 5'-triphosphate + ADP. The enzyme catalyses a ribonucleoside 5'-diphosphate + ATP = a ribonucleoside 5'-triphosphate + ADP. Its function is as follows. Catalyzes the phosphorylation of pyrimidine nucleoside monophosphates at the expense of ATP. Plays an important role in de novo pyrimidine nucleotide biosynthesis. Has preference for UMP and CMP as phosphate acceptors. Also displays broad nucleoside diphosphate kinase activity. This chain is UMP-CMP kinase (cmpk), found in Danio rerio (Zebrafish).